The following is a 697-amino-acid chain: Testis-specific gene 10 protein (697 aa).

The segment at Gln556–Leu688 is interaction with HIF1A. The interval Asn656–Leu684 is disordered. A compositionally biased stretch (basic and acidic residues) spans His670–Leu684. Phosphoserine is present on Ser687.

This sequence belongs to the CEP135/TSGA10 family. In terms of assembly, interacts with HIF1A. Processed into N-terminal 27-kDa and C-terminal 55-kDa fragments. As to expression, predominantly expressed in testis, in spermatozoa (at protein level). Not detected in Leydig cells. The N-terminal 27-kDa fragment is also detected in liver, while the C-terminal 55-kDa fragment is also found retina, brain and kidney (at protein level).

Its subcellular location is the cytoplasm. The protein localises to the cytoskeleton. The protein resides in the microtubule organizing center. It is found in the centrosome. It localises to the centriole. In terms of biological role, plays a role in spermatogenesis. When overexpressed, prevents nuclear localization of HIF1A. The protein is Testis-specific gene 10 protein (Tsga10) of Mus musculus (Mouse).